The primary structure comprises 207 residues: Cytochrome c biogenesis ATP-binding export protein CcmA (207 aa).

In terms of domain architecture, ABC transporter spans 4–207; the sequence is LEARELLCER…RISLTQTRAA (204 aa). 36 to 43 lines the ATP pocket; it reads GSNGAGKT.

It belongs to the ABC transporter superfamily. CcmA exporter (TC 3.A.1.107) family. In terms of assembly, the complex is composed of two ATP-binding proteins (CcmA) and two transmembrane proteins (CcmB).

The protein resides in the cell inner membrane. It catalyses the reaction heme b(in) + ATP + H2O = heme b(out) + ADP + phosphate + H(+). Its function is as follows. Part of the ABC transporter complex CcmAB involved in the biogenesis of c-type cytochromes; once thought to export heme, this seems not to be the case, but its exact role is uncertain. Responsible for energy coupling to the transport system. This is Cytochrome c biogenesis ATP-binding export protein CcmA from Shigella boydii serotype 4 (strain Sb227).